The chain runs to 685 residues: Multicopper oxidase VdtB (685 aa).

A signal peptide spans 1-17 (MPAYLLLLACNVLLVLG). 2 consecutive Plastocyanin-like domains span residues 26-139 (LTWE…IRRK) and 168-368 (IMML…RYKN). N-linked (GlcNAc...) asparagine glycosylation occurs at Asn71. Residues His75, His77, His119, and His121 each coordinate Cu cation. N-linked (GlcNAc...) asparagine glycans are attached at residues Asn178, Asn229, Asn253, Asn432, and Asn475. A Plastocyanin-like 3 domain is found at 466–585 (DDDLIIRTQN…DNGMAMAILD (120 aa)). His500 is a Cu cation binding site. A glycan (N-linked (GlcNAc...) asparagine) is linked at Asn517. A helical transmembrane segment spans residues 627 to 647 (SLVWAGGAAVVLLSLFIGGLW).

This sequence belongs to the multicopper oxidase family.

The protein resides in the membrane. It catalyses the reaction 4 semiviriditoxin + O2 = 2 (M)-viriditoxin + 2 H2O. The protein operates within secondary metabolite biosynthesis. Functionally, multicopper oxidase; part of the gene cluster that mediates the biosynthesis of viriditoxin, one of the 'classical' secondary metabolites produced by fungi and that has antibacterial activity. The first step is performed by the polyketide synthase VdtA which condenses one acetyl-CoA and 6 malonyl-CoA units to form the heptaketide monomer backbone of viriditoxin. The product of VdtA is then O-methylated on C7 by the O-methyltransferase VdtC. The O-methyl group is important for the stereoselective coupling of the monomers at the final step of viriditoxin biosynthesis. The short-chain dehydrogenase/reductase VdtF then acts as a stereospecific reductase converting the pyrone to dihydropyrone via the reduction of the C3-C4 double bond. The FAD-binding monooxygenase VdtE then converts the ketone group into a methyl-ester group to yield semi-viriditoxin. Finally, the laccase VdtB is involved in dimerization of 2 semi-viriditoxin molecules to yield the final viriditoxin. VdtB is responsible for the regioselective 6,6'-coupling of semi-viriditoxin, which yields (M)-viriditoxin and (P)-viriditoxin at a ratio of 1:2. The non-catalytic carboxylesterase-like protein VdtD affects the stereochemistical outcome of the coupling. The highly reducing polyketide synthase VdtX is not involved in viriditoxin synthesis, but might possibly play a role in the production of additional metabolites not identified yet. This chain is Multicopper oxidase VdtB, found in Byssochlamys spectabilis (Paecilomyces variotii).